A 186-amino-acid polypeptide reads, in one-letter code: Large ribosomal subunit protein eL18 (186 aa).

This sequence belongs to the eukaryotic ribosomal protein eL18 family. Component of the large ribosomal subunit. Mature ribosomes consist of a small (40S) and a large (60S) subunit. The 40S subunit contains about 32 different proteins and 1 molecule of RNA (18S). The 60S subunit contains 45 different proteins and 3 molecules of RNA (25S, 5.8S and 5S).

It is found in the cytoplasm. Functionally, component of the ribosome, a large ribonucleoprotein complex responsible for the synthesis of proteins in the cell. The small ribosomal subunit (SSU) binds messenger RNAs (mRNAs) and translates the encoded message by selecting cognate aminoacyl-transfer RNA (tRNA) molecules. The large subunit (LSU) contains the ribosomal catalytic site termed the peptidyl transferase center (PTC), which catalyzes the formation of peptide bonds, thereby polymerizing the amino acids delivered by tRNAs into a polypeptide chain. The nascent polypeptides leave the ribosome through a tunnel in the LSU and interact with protein factors that function in enzymatic processing, targeting, and the membrane insertion of nascent chains at the exit of the ribosomal tunnel. The protein is Large ribosomal subunit protein eL18 of Candida albicans (strain SC5314 / ATCC MYA-2876) (Yeast).